A 486-amino-acid chain; its full sequence is Patatin-like phospholipase domain-containing protein 2 (486 aa).

Topologically, residues 1-8 are cytoplasmic; sequence MFPKETTW. Residues 9–29 form a helical membrane-spanning segment; it reads NISFAGCGFLGVYHIGVASCL. Residues 10 to 179 form the PNPLA domain; it reads ISFAGCGFLG…SDNLPLYELK (170 aa). The short motif at 14–19 is the GXGXXG element; it reads GCGFLG. Residues 30-42 lie on the Extracellular side of the membrane; that stretch reads REHAPFLVANATH. A glycan (N-linked (GlcNAc...) asparagine) is linked at Asn39. A helical transmembrane segment spans residues 43–63; sequence IYGASAGALTATALVTGACLG. The GXSXG signature appears at 45 to 49; sequence GASAG. Ser47 serves as the catalytic Nucleophile. Residues 64–137 lie on the Cytoplasmic side of the membrane; that stretch reads EAGANIIEVS…IITHFNSKEE (74 aa). Lys92 is covalently cross-linked (Glycyl lysine isopeptide (Lys-Gly) (interchain with G-Cter in ubiquitin)). Residues 138–158 form a helical membrane-spanning segment; that stretch reads LIQANVCSTFIPVYCGLIPPS. The Extracellular portion of the chain corresponds to 159–334; the sequence is LQGVRYVDGG…TTLSNMLPVR (176 aa). The Proton acceptor role is filled by Asp166. Positions 166–168 match the DGA/G motif; the sequence is DGG. A helical transmembrane segment spans residues 335–355; the sequence is LAMAMMVPYTLPLESAVSFTI. The Cytoplasmic portion of the chain corresponds to 356 to 486; sequence RLLEWLPDVP…PQHPPSSPPC (131 aa). The residue at position 377 (Ser377) is a Phosphoserine; in vitro. 2 positions are modified to phosphoserine; by PKA: Ser399 and Ser409. Ser433 carries the phosphoserine; in vitro modification.

In terms of assembly, interacts with ABHD5; this association stimulates PNPLA2 triglyceride hydrolase activity. Interacts with SERPINF1; this interaction stimulates the phospholipase A2 activity of PNPLA2. Despite a colocalization in lipid droplets, it probably does not interact with PLIN. Interacts with PLIN5; prevents interaction with ABHD5. Interacts with FAF2. Phosphorylation at Ser-409 by PKA is increased during fasting and moderate intensity exercise, and moderately increases lipolytic activity. Post-translationally, ubiquitinated by PEX2 in response to reactive oxygen species (ROS), leading to its degradation. Ubiquitination is stimulated by LDAH.

It localises to the lipid droplet. The protein localises to the cell membrane. It is found in the cytoplasm. It catalyses the reaction a triacylglycerol + H2O = a diacylglycerol + a fatty acid + H(+). The catalysed reaction is a triacylglycerol + H2O = a 1,2-diacylglycerol + a fatty acid + H(+). The enzyme catalyses a triacylglycerol + H2O = a 1,3-diacylglycerol + a fatty acid + H(+). It carries out the reaction a triacyl-sn-glycerol + H2O = a 1,3-diacyl-sn-glycerol + a fatty acid + H(+). It catalyses the reaction a triacyl-sn-glycerol + H2O = a 2,3-diacyl-sn-glycerol + a fatty acid + H(+). The catalysed reaction is a 1-acylglycerol + a 1,3-diacylglycerol = a triacylglycerol + glycerol. The enzyme catalyses a 1-acylglycerol + a 1,2-diacylglycerol = a triacylglycerol + glycerol. It carries out the reaction 2 a 1-acylglycerol = a 1,2-diacylglycerol + glycerol. It catalyses the reaction a triacylglycerol + all-trans-retinol = an all-trans-retinyl ester + a diacylglycerol. The catalysed reaction is 1,2-di-(9Z-octadecenoyl)-glycerol + (9Z)-octadecenoate + H(+) = 1,2,3-tri-(9Z-octadecenoyl)-glycerol + H2O. The enzyme catalyses 1,2,3-tri-(9Z-octadecenoyl)-glycerol + H2O = 1,3-di-(9Z-octadecenoyl)-glycerol + (9Z)-octadecenoate + H(+). It carries out the reaction 1-(9Z-octadecenoyl)-glycerol + 1,3-di-(9Z-octadecenoyl)-glycerol = 1,2,3-tri-(9Z-octadecenoyl)-glycerol + glycerol. It catalyses the reaction 1-(9Z-octadecenoyl)-glycerol + 1,2-di-(9Z-octadecenoyl)-glycerol = 1,2,3-tri-(9Z-octadecenoyl)-glycerol + glycerol. The catalysed reaction is 2 1-(9Z-octadecenoyl)-glycerol = 1,2-di-(9Z-octadecenoyl)-glycerol + glycerol. The enzyme catalyses 1,2,3-tri-(9Z-octadecenoyl)-glycerol + all-trans-retinol = all-trans-retinyl 9Z-octadecenoate + di-(9Z)-octadecenoylglycerol. It carries out the reaction 1,2,3-tri-(9Z)-hexadecenoylglycerol + H2O = 1,3-di-(9Z)-hexadecenoylglycerol + (9Z)-hexadecenoate + H(+). It catalyses the reaction 1,2,3-tri-(9Z,12Z)-octadecadienoylglycerol + H2O = 1,3-di-(9Z,12Z)-octadecadienoylglycerol + (9Z,12Z)-octadecadienoate + H(+). The catalysed reaction is 1,2,3-tri-(9Z,12Z,15Z)-octadecatrienoylglycerol + H2O = 1,3-di-(9Z,12Z,15Z)-octadecatrienoylglycerol + (9Z,12Z,15Z)-octadecatrienoate + H(+). The enzyme catalyses 1,3-di-(9Z)-octadecenoyl-2-hexadecanoylglycerol + H2O = 1,3-di-(9Z-octadecenoyl)-glycerol + hexadecanoate + H(+). It carries out the reaction 1,2-di-(9Z)-octadecenoyl-3-hexadecanoyl-sn-glycerol + H2O = 1-(9Z)-octadecenoyl-3-hexadecanoyl-sn-glycerol + (9Z)-octadecenoate + H(+). It catalyses the reaction 1-hexadecanoyl-2,3-di-(9Z)-octadecenoyl-sn-glycerol + H2O = 1-hexadecanoyl-3-(9Z)-octadecenoyl-sn-glycerol + (9Z)-octadecenoate + H(+). The catalysed reaction is 1,2,3-tri-(9Z-octadecenoyl)-glycerol + H2O = 2,3-di-(9Z)-octadecenoyl-sn-glycerol + (9Z)-octadecenoate + H(+). The enzyme catalyses 1,2,3-tri-(9Z)-hexadecenoylglycerol + H2O = 2,3-di-(9Z)-hexadecenoyl-sn-glycerol + (9Z)-hexadecenoate + H(+). It carries out the reaction 1,2,3-tri-(9Z,12Z)-octadecadienoylglycerol + H2O = 2,3-di-(9Z,12Z)-octadecadienoyl-sn-glycerol + (9Z,12Z)-octadecadienoate + H(+). It catalyses the reaction 1,2,3-tri-(9Z,12Z,15Z)-octadecatrienoylglycerol + H2O = 2,3-di-(9Z,12Z,15Z)-octadecatrienoyl-sn-glycerol + (9Z,12Z,15Z)-octadecatrienoate + H(+). The catalysed reaction is 1,3-di-(9Z)-octadecenoyl-2-hexadecanoylglycerol + H2O = 2-hexadecanoyl-3-(9Z)-octadecenoyl-sn-glycerol + (9Z)-octadecenoate + H(+). The enzyme catalyses 1-hexadecanoyl-2,3-di-(9Z)-octadecenoyl-sn-glycerol + H2O = 2,3-di-(9Z)-octadecenoyl-sn-glycerol + hexadecanoate + H(+). It carries out the reaction 1,2-di-(9Z)-octadecenoyl-3-hexadecanoyl-sn-glycerol + H2O = 2-(9Z-octadecenoyl)-3-hexadecanoyl-sn-glycerol + (9Z)-octadecenoate + H(+). It catalyses the reaction a 1,2-diacyl-sn-glycero-3-phosphocholine + H2O = a 1-acyl-sn-glycero-3-phosphocholine + a fatty acid + H(+). The catalysed reaction is 1,2,3-tri-(9Z-octadecenoyl)-glycerol + 9-hydroxy-octadecanoate = 9-(9Z-octadecenoyloxy)-octadecanoate + 2,3-di-(9Z)-octadecenoyl-sn-glycerol. The enzyme catalyses 1-hexadecanoyl-2,3-di-(9Z)-octadecenoyl-sn-glycerol + 9-hydroxy-octadecanoate = 9-hexadecanoyloxy-octadecanoate + 2,3-di-(9Z)-octadecenoyl-sn-glycerol. It carries out the reaction 1,2,3-tri-(10Z)-heptadecenoylglycerol + 9-hydroxy-octadecanoate = 2,3-di-(10Z-heptadecenoyl)-sn-glycerol + 9-(10Z-heptadecenoyloxy)-octadecanoate. It catalyses the reaction 1,2,3-tri-(9Z,12Z)-octadecadienoylglycerol + 9-hydroxy-octadecanoate = 2,3-di-(9Z,12Z)-octadecadienoyl-sn-glycerol + 9-(9Z,12Z-octadecadienoyloxy)-octadecanoate. The catalysed reaction is 1,2,3-tri-(9Z)-hexadecenoylglycerol + 9-hydroxy-octadecanoate = 2,3-di-(9Z)-hexadecenoyl-sn-glycerol + 9-(9Z-hexadecenoyloxy)-octadecanoate. The enzyme catalyses 9-hydroxy-octadecanoate + 1,2-di-(9Z-octadecenoyl)-sn-glycerol = 9-(9Z-octadecenoyloxy)-octadecanoate + 2-(9Z-octadecenoyl)-glycerol. It carries out the reaction 1-hexadecanoyl-2,3-di-(9Z)-octadecenoyl-sn-glycerol + 9-hydroxy-octadecanoate = 1-hexadecanoyl-3-(9Z)-octadecenoyl-sn-glycerol + 9-(9Z-octadecenoyloxy)-octadecanoate. Its pathway is glycerolipid metabolism; triacylglycerol degradation. Its function is as follows. Catalyzes the initial step in triglyceride hydrolysis in adipocyte and non-adipocyte lipid droplets. Exhibits a strong preference for the hydrolysis of long-chain fatty acid esters at the sn-2 position of the glycerol backbone and acts coordinately with LIPE/HLS and DGAT2 within the lipolytic cascade. Also possesses acylglycerol transacylase and phospholipase A2 activities. Transfers fatty acid from triglyceride to retinol, hydrolyzes retinylesters, and generates 1,3-diacylglycerol from triglycerides. Regulates adiposome size and may be involved in the degradation of adiposomes. Catalyzes the formation of an ester bond between hydroxy fatty acids and fatty acids derived from triglycerides or diglycerides to generate fatty acid esters of hydroxy fatty acids (FAHFAs) in adipocytes. Acts antagonistically with LDAH in regulation of cellular lipid stores. Inhibits LDAH-stimulated lipid droplet fusion. May play an important role in energy homeostasis. May play a role in the response of the organism to starvation, enhancing hydrolysis of triglycerides and providing free fatty acids to other tissues to be oxidized in situations of energy depletion. The sequence is that of Patatin-like phospholipase domain-containing protein 2 (PNPLA2) from Bos taurus (Bovine).